Consider the following 364-residue polypeptide: CCA-adding enzyme (364 aa).

The ATP site is built by Gly-19 and Arg-22. CTP is bound by residues Gly-19 and Arg-22. The Mg(2+) site is built by Asp-32 and Asp-34. ATP is bound by residues Arg-102, Arg-148, and Arg-151. CTP is bound by residues Arg-102, Arg-148, and Arg-151.

Belongs to the tRNA nucleotidyltransferase/poly(A) polymerase family. Bacterial CCA-adding enzyme type 2 subfamily. Mg(2+) is required as a cofactor.

The catalysed reaction is a tRNA precursor + 2 CTP + ATP = a tRNA with a 3' CCA end + 3 diphosphate. The enzyme catalyses a tRNA with a 3' CCA end + 2 CTP + ATP = a tRNA with a 3' CCACCA end + 3 diphosphate. In terms of biological role, catalyzes the addition and repair of the essential 3'-terminal CCA sequence in tRNAs without using a nucleic acid template. Adds these three nucleotides in the order of C, C, and A to the tRNA nucleotide-73, using CTP and ATP as substrates and producing inorganic pyrophosphate. tRNA 3'-terminal CCA addition is required both for tRNA processing and repair. Also involved in tRNA surveillance by mediating tandem CCA addition to generate a CCACCA at the 3' terminus of unstable tRNAs. While stable tRNAs receive only 3'-terminal CCA, unstable tRNAs are marked with CCACCA and rapidly degraded. The sequence is that of CCA-adding enzyme from Bordetella pertussis (strain Tohama I / ATCC BAA-589 / NCTC 13251).